Reading from the N-terminus, the 302-residue chain is Recombination-associated protein RdgC (302 aa).

It belongs to the RdgC family.

It localises to the cytoplasm. The protein localises to the nucleoid. Its function is as follows. May be involved in recombination. This chain is Recombination-associated protein RdgC, found in Haemophilus influenzae (strain PittGG).